A 195-amino-acid polypeptide reads, in one-letter code: NADH-quinone oxidoreductase subunit B (195 aa).

[4Fe-4S] cluster-binding residues include Cys-74, Cys-75, Cys-139, and Cys-169.

Belongs to the complex I 20 kDa subunit family. NDH-1 is composed of 14 different subunits. Subunits NuoB, C, D, E, F, and G constitute the peripheral sector of the complex. The cofactor is [4Fe-4S] cluster.

It localises to the cell inner membrane. It catalyses the reaction a quinone + NADH + 5 H(+)(in) = a quinol + NAD(+) + 4 H(+)(out). In terms of biological role, NDH-1 shuttles electrons from NADH, via FMN and iron-sulfur (Fe-S) centers, to quinones in the respiratory chain. The immediate electron acceptor for the enzyme in this species is believed to be ubiquinone. Couples the redox reaction to proton translocation (for every two electrons transferred, four hydrogen ions are translocated across the cytoplasmic membrane), and thus conserves the redox energy in a proton gradient. This Methylobacterium sp. (strain 4-46) protein is NADH-quinone oxidoreductase subunit B.